The primary structure comprises 206 residues: Ribosomal RNA large subunit methyltransferase E (206 aa).

Positions 60, 62, 80, 96, and 121 each coordinate S-adenosyl-L-methionine. The active-site Proton acceptor is Lys-161.

It belongs to the class I-like SAM-binding methyltransferase superfamily. RNA methyltransferase RlmE family.

It is found in the cytoplasm. The enzyme catalyses uridine(2552) in 23S rRNA + S-adenosyl-L-methionine = 2'-O-methyluridine(2552) in 23S rRNA + S-adenosyl-L-homocysteine + H(+). Functionally, specifically methylates the uridine in position 2552 of 23S rRNA at the 2'-O position of the ribose in the fully assembled 50S ribosomal subunit. The protein is Ribosomal RNA large subunit methyltransferase E of Nitrosospira multiformis (strain ATCC 25196 / NCIMB 11849 / C 71).